Consider the following 460-residue polypeptide: GTPase Der (460 aa).

EngA-type G domains are found at residues 3-167 and 189-364; these read FTIA…PEPT and IRVA…AIWN. GTP contacts are provided by residues 9 to 16, 56 to 60, 119 to 122, 195 to 202, 242 to 246, and 307 to 310; these read GRPNVGKS, DTAGL, NKSE, GRPNAGKS, and NKWD. In terms of domain architecture, KH-like spans 365 to 449; the sequence is RRVPTAALNR…PIRITLREKA (85 aa).

This sequence belongs to the TRAFAC class TrmE-Era-EngA-EngB-Septin-like GTPase superfamily. EngA (Der) GTPase family. Associates with the 50S ribosomal subunit.

GTPase that plays an essential role in the late steps of ribosome biogenesis. This is GTPase Der from Nitrobacter hamburgensis (strain DSM 10229 / NCIMB 13809 / X14).